A 304-amino-acid polypeptide reads, in one-letter code: Hairy/enhancer-of-split related with YRPW motif protein 1 (304 aa).

Residues 1 to 52 (MKRAHPDYSSSDSELDETVEVEKESADENGNLSSALGSMSPTTSSQILARKR) are disordered. The span at 28 to 47 (ENGNLSSALGSMSPTTSSQI) shows a compositional bias: polar residues. The transcriptional repression and interaction with NCOR1 and SIN3A stretch occupies residues 48–117 (LARKRRRGII…GGKGYFDAHA (70 aa)). The region spanning 49-104 (ARKRRRGIIEKRRRDRINNSLSELRRLVPSAFEKQGSAKLEKAEILQMTVDHLKML) is the bHLH domain. The 37-residue stretch at 122 to 158 (YRSLGFRECLAEVARYLSIIEGLDASDPLRVRLVSHL) folds into the Orange domain. The disordered stretch occupies residues 191-234 (AHPLLLPQSGHGNTGTSASPTDPHHQGRLAAAHPEAPALRAPPS). Over residues 200 to 210 (GHGNTGTSASP) the composition is skewed to polar residues. Residues 218 to 234 (RLAAAHPEAPALRAPPS) are compositionally biased toward low complexity.

The protein belongs to the HEY family. In terms of assembly, self-associates. Interacts with HES1 and HEYL. Interacts with HDAC1, NCOR1 and SIN3A. Interacts with GATA4 and GATA6. Interacts with CCDC89/BOIP.

It is found in the nucleus. Transcriptional repressor which binds preferentially to the canonical E box sequence 5'-CACGTG-3'. Downstream effector of Notch signaling required for cardiovascular development. Specifically required for the Notch-induced endocardial epithelial to mesenchymal transition, which is itself criticial for cardiac valve and septum development. May be required in conjunction with HEY2 to specify arterial cell fate or identity. Promotes maintenance of neuronal precursor cells and glial versus neuronal fate specification. Represses transcription by the cardiac transcriptional activators GATA4 and GATA6 and by the neuronal bHLH factors ASCL1/MASH1 and NEUROD4/MATH3. This chain is Hairy/enhancer-of-split related with YRPW motif protein 1 (HEY1), found in Canis lupus familiaris (Dog).